Consider the following 402-residue polypeptide: Advanced glycosylation end product-specific receptor (402 aa).

An N-terminal signal peptide occupies residues Met1 to Gly22. Residues Gly23–Lys109 enclose the Ig-like V-type domain. At Gly23–Leu341 the chain is on the extracellular side. Residues Asn25 and Asn80 are each glycosylated (N-linked (GlcNAc...) asparagine). 2 disulfide bridges follow: Cys38–Cys98 and Cys143–Cys206. Ig-like C2-type domains follow at residues Pro123–Asn219 and Pro233–Asn315. A helical transmembrane segment spans residues Ala342–Arg362. Over Lys363–Pro402 the chain is Cytoplasmic. The segment at Leu368–Pro402 is disordered. Residues Ser376 and Ser389 each carry the phosphoserine modification. Acidic residues predominate over residues Ser376–Met394.

In terms of assembly, constitutive homodimer; disulfide-linked. Forms homooligomers. Interacts with S100A1 and APP. Interacts with S100B, S100A12 and S100A14. Interacts with TIRAP. Interacts with HMGB1. Interacts with LGP2; this interaction plays an important role in AGER-mediated pro-inflammatory responses and cytokine release. Interacts with double-strand break repair protein MRE11 which is a core component of the MRN complex; the interaction enhances MRE11 endonuclease activity and promotes DNA repair. Interacts with the MCM2-7 complex via interaction with complex member MCM2; the interaction is increased following DNA replication stress and stabilizes the MCM2-7 complex at replication forks. Phosphorylated on its cytoplasmic domain by PKCzeta/PRKCZ upon ligand binding. Phosphorylated by ATM following DNA damage. In terms of processing, targeted by the ubiquitin E3 ligase subunit FBXO10 to mediate its ubiquitination and degradation. In terms of tissue distribution, endothelial cells and cardiomyocytes. Expressed in brain.

The protein localises to the cell membrane. It is found in the cell projection. The protein resides in the phagocytic cup. Its subcellular location is the early endosome. It localises to the nucleus. Functionally, cell surface pattern recognition receptor that senses endogenous stress signals with a broad ligand repertoire including advanced glycation end products, S100 proteins, high-mobility group box 1 protein/HMGB1, amyloid beta/APP oligomers, nucleic acids, histones, phospholipids and glycosaminoglycans. Advanced glycosylation end products are nonenzymatically glycosylated proteins which accumulate in vascular tissue in aging and at an accelerated rate in diabetes. These ligands accumulate at inflammatory sites during the pathogenesis of various diseases including diabetes, vascular complications, neurodegenerative disorders and cancers, and RAGE transduces their binding into pro-inflammatory responses. Upon ligand binding, uses TIRAP and MYD88 as adapters to transduce the signal ultimately leading to the induction of inflammatory cytokines IL6, IL8 and TNFalpha through activation of NF-kappa-B. Interaction with S100A12 on endothelium, mononuclear phagocytes, and lymphocytes triggers cellular activation, with generation of key pro-inflammatory mediators. Interaction with S100B after myocardial infarction may play a role in myocyte apoptosis by activating ERK1/2 and p53/TP53 signaling. Contributes to the translocation of amyloid-beta peptide (ABPP) across the cell membrane from the extracellular to the intracellular space in cortical neurons. ABPP-initiated RAGE signaling, especially stimulation of p38 mitogen-activated protein kinase (MAPK), has the capacity to drive a transport system delivering ABPP as a complex with RAGE to the intraneuronal space. Participates in endothelial albumin transcytosis together with HMGB1 through the RAGE/SRC/Caveolin-1 pathway, leading to endothelial hyperpermeability. Mediates the loading of HMGB1 in extracellular vesicles (EVs) that shuttle HMGB1 to hepatocytes by transferrin-mediated endocytosis and subsequently promote hepatocyte pyroptosis by activating the NLRP3 inflammasome. Binds to DNA and promotes extracellular hypomethylated DNA (CpG DNA) uptake by cells via the endosomal route to activate inflammatory responses. Mediates phagocytosis by non-professional phagocytes (NPP) and this is enhanced by binding to ligands including RNA, DNA, HMGB1 and histones. Promotes NPP-mediated phagocytosis of Saccharomyces cerevisiae spores by binding to RNA attached to the spore wall. Also promotes NPP-mediated phagocytosis of apoptotic cells. Following DNA damage, recruited to DNA double-strand break sites where it colocalizes with the MRN repair complex via interaction with double-strand break repair protein MRE11. Enhances the endonuclease activity of MRE11, promoting the end resection of damaged DNA. Promotes DNA damage repair in trophoblasts which enhances trophoblast invasion and contributes to placental development and maintenance. Protects cells from DNA replication stress by localizing to damaged replication forks where it stabilizes the MCM2-7 complex and promotes faithful progression of the replication fork. In Rattus norvegicus (Rat), this protein is Advanced glycosylation end product-specific receptor (Ager).